Here is a 198-residue protein sequence, read N- to C-terminus: Superoxide dismutase [Fe] (198 aa).

Residues histidine 27, histidine 74, aspartate 157, and histidine 161 each contribute to the Fe(3+) site.

This sequence belongs to the iron/manganese superoxide dismutase family. In terms of assembly, homodimer. Fe(3+) is required as a cofactor.

The enzyme catalyses 2 superoxide + 2 H(+) = H2O2 + O2. In terms of biological role, destroys superoxide anion radicals which are normally produced within the cells and which are toxic to biological systems. The chain is Superoxide dismutase [Fe] (sodB) from Pseudomonas putida (Arthrobacter siderocapsulatus).